Reading from the N-terminus, the 499-residue chain is Chaperone SurA (499 aa).

The first 36 residues, 1 to 36 (MKRQEFALFSLTLMLSPWRRVLLPAVLAAMAGPALA), serve as a signal peptide directing secretion. PpiC domains lie at 231-333 (PTEF…KLTA) and 352-450 (ITQT…QVEN).

Its subcellular location is the periplasm. It catalyses the reaction [protein]-peptidylproline (omega=180) = [protein]-peptidylproline (omega=0). Chaperone involved in the correct folding and assembly of outer membrane proteins. Recognizes specific patterns of aromatic residues and the orientation of their side chains, which are found more frequently in integral outer membrane proteins. May act in both early periplasmic and late outer membrane-associated steps of protein maturation. The polypeptide is Chaperone SurA (Cupriavidus pinatubonensis (strain JMP 134 / LMG 1197) (Cupriavidus necator (strain JMP 134))).